The sequence spans 785 residues: E3 UFM1-protein ligase 1 homolog (785 aa).

The tract at residues 404-483 (GGNASNQLDD…GGGGSNKKSV (80 aa)) is disordered.

It belongs to the UFL1 family.

Its function is as follows. E3 UFM1-protein ligase that mediates ufmylation of target proteins. In Drosophila willistoni (Fruit fly), this protein is E3 UFM1-protein ligase 1 homolog.